A 610-amino-acid polypeptide reads, in one-letter code: Autophagy-related protein 22-1 (610 aa).

Residues 1–29 are disordered; it reads MIFTSTPPAPPPADAQQRQPRYPGEDTTP. Residues 41 to 61 form a helical membrane-spanning segment; the sequence is YGIAAEVFAVCGVGSFLPLTL. Residue asparagine 90 is glycosylated (N-linked (GlcNAc...) asparagine). Transmembrane regions (helical) follow at residues 120–140, 153–173, and 177–197; these read SFAM…LISF, LLLT…FISP, and ILGA…FVVL. Residues 216–242 form a disordered region; it reads KTEGEELPHLDSSGEYTRSGSFNRGDN. Over residues 229–239 the composition is skewed to polar residues; it reads GEYTRSGSFNR. The next 4 membrane-spanning stretches (helical) occupy residues 277–297, 310–330, 379–399, and 415–435; these read GVGL…LLLF, TLPL…FTVV, VVIF…VSGT, and VGLL…LWPV. N-linked (GlcNAc...) asparagine glycosylation occurs at asparagine 445. Transmembrane regions (helical) follow at residues 450–470, 485–507, 527–547, and 550–570; these read LCIA…IPLV, FPLG…SFFG, KGSS…TGQV, and GFFF…MVNA. The disordered stretch occupies residues 586 to 610; sequence KSHGENSSEFGHPSEEAEGLLARNP. An N-linked (GlcNAc...) asparagine glycan is attached at asparagine 591.

The protein belongs to the ATG22 family.

The protein localises to the vacuole membrane. Vacuolar effluxer which mediate the efflux of amino acids resulting from autophagic degradation. The release of autophagic amino acids allows the maintenance of protein synthesis and viability during nitrogen starvation. The chain is Autophagy-related protein 22-1 (atg22-1) from Aspergillus clavatus (strain ATCC 1007 / CBS 513.65 / DSM 816 / NCTC 3887 / NRRL 1 / QM 1276 / 107).